Reading from the N-terminus, the 274-residue chain is Thiamine kinase (274 aa).

It belongs to the thiamine kinase family.

The enzyme catalyses thiamine + ATP = thiamine phosphate + ADP + H(+). It participates in cofactor biosynthesis; thiamine diphosphate biosynthesis; thiamine phosphate from thiamine: step 1/1. Its function is as follows. Catalyzes the ATP-dependent phosphorylation of thiamine to thiamine phosphate. Is involved in thiamine salvage. The chain is Thiamine kinase from Escherichia coli O139:H28 (strain E24377A / ETEC).